We begin with the raw amino-acid sequence, 635 residues long: 5-aminolevulinate synthase, non-specific, mitochondrial (635 aa).

The transit peptide at 1–56 (MEAVVRRCPFLARVSQAFLQKAGPSLLFYAQHCPKMMEAAPPAAARGLATSASRGQ) directs the protein to the mitochondrion. Residues 44-66 (AARGLATSASRGQQVEETPAAQP) are compositionally biased toward low complexity. The segment at 44-94 (AARGLATSASRGQQVEETPAAQPEAKKAKEVAQQNTDGSQPPAGHPPAAAV) is disordered. Substrate contacts are provided by Arg212, Ser329, and Lys348. The pyridoxal 5'-phosphate site is built by Ser381, His409, and Thr437. The active site involves Lys440. Lys440 bears the N6-(pyridoxal phosphate)lysine mark. The pyridoxal 5'-phosphate site is built by Thr469 and Thr470. Substrate is bound at residue Thr557.

The protein belongs to the class-II pyridoxal-phosphate-dependent aminotransferase family. In terms of assembly, homodimer. Requires pyridoxal 5'-phosphate as cofactor. As to expression, ubiquitous.

Its subcellular location is the mitochondrion inner membrane. It carries out the reaction succinyl-CoA + glycine + H(+) = 5-aminolevulinate + CO2 + CoA. The protein operates within porphyrin-containing compound metabolism; protoporphyrin-IX biosynthesis; 5-aminolevulinate from glycine: step 1/1. Functionally, catalyzes the pyridoxal 5'-phosphate (PLP)-dependent condensation of succinyl-CoA and glycine to form aminolevulinic acid (ALA), with CoA and CO2 as by-products. The sequence is that of 5-aminolevulinate synthase, non-specific, mitochondrial (ALAS1) from Gallus gallus (Chicken).